We begin with the raw amino-acid sequence, 196 residues long: Probable malonic semialdehyde reductase RutE (196 aa).

Belongs to the nitroreductase family. HadB/RutE subfamily. FMN serves as cofactor.

The catalysed reaction is 3-hydroxypropanoate + NADP(+) = 3-oxopropanoate + NADPH + H(+). Functionally, may reduce toxic product malonic semialdehyde to 3-hydroxypropionic acid, which is excreted. This Escherichia coli O7:K1 (strain IAI39 / ExPEC) protein is Probable malonic semialdehyde reductase RutE.